The following is a 952-amino-acid chain: Calsyntenin-1 (952 aa).

An N-terminal signal peptide occupies residues 1–28; that stretch reads MLRRPAPALARAVRLLLAGLLYGGGVWA. The Extracellular segment spans residues 29 to 830; that stretch reads ARVNKHKPWL…PHPFAVVPST (802 aa). 2 Cadherin domains span residues 38 to 154 and 155 to 255; these read LEPT…APVF and KEKS…SPGW. An N-linked (GlcNAc...) asparagine glycan is attached at asparagine 356. The helical transmembrane segment at 831–851 threads the bilayer; sequence ATVVIVVCVSFLVFMIILGVF. Over 852–952 the chain is Cytoplasmic; the sequence is RIRAAHQRTM…LEWDYSTLSY (101 aa). Residues 886 to 952 are disordered; that stretch reads METYEDQHSS…LEWDYSTLSY (67 aa). Residues 896–930 are compositionally biased toward acidic residues; that stretch reads EEEEEEEEEEESEDGEEEEDITSAESESSEEEEGG. Polar residues predominate over residues 934–952; it reads GQNTTRQQQLEWDYSTLSY.

This sequence belongs to the calsyntenin family. Directly interacts with APBA2. Forms a tripartite complex with APBA2 and APP. Interacts with KLC1. In terms of assembly, interacts with APBB1; this interaction stabilizes AlcICD metabolism. As to quaternary structure, interacts with PSEN1. Proteolytically processed under normal cellular conditions. A primary zeta-cleavage generates a large extracellular (soluble) N-terminal domain (sAlc) and a short C-terminal transmembrane fragment (CTF1). A secondary cleavage catalyzed by presenilin gamma-secretase within the transmembrane domain releases the beta-Alc-alpha chain in the extracellular milieu and produces an intracellular fragment (AlcICD). This processing is strongly suppressed in the tripartite complex formed with APBA2 and APP, which seems to prevent the association with PSEN1. Preferentially expressed in the retina and brain.

Its subcellular location is the postsynaptic cell membrane. It is found in the endoplasmic reticulum membrane. The protein localises to the golgi apparatus membrane. It localises to the cell projection. The protein resides in the neuron projection. Its subcellular location is the nucleus. Postsynaptic adhesion molecule that binds to presynaptic neurexins to mediate both excitatory and inhibitory synapse formation. Promotes synapse development by acting as a cell adhesion molecule at the postsynaptic membrane, which associates with neurexin-alpha at the presynaptic membrane. Also functions as a cargo in axonal anterograde transport by acting as a molecular adapter that promotes KLC1 association with vesicles. Complex formation with APBA2 and APP, stabilizes APP metabolism and enhances APBA2-mediated suppression of beta-APP40 secretion, due to the retardation of intracellular APP maturation. In terms of biological role, as intracellular fragment AlcICD, suppresses APBB1-dependent transactivation stimulated by APP C-terminal intracellular fragment (AICD), most probably by competing with AICD for APBB1-binding. Its function is as follows. In complex with APBA2 and C99, a C-terminal APP fragment, abolishes C99 interaction with PSEN1 and thus APP C99 cleavage by gamma-secretase, most probably through stabilization of the direct interaction between APBA2 and APP. This is Calsyntenin-1 (Clstn1) from Rattus norvegicus (Rat).